We begin with the raw amino-acid sequence, 307 residues long: MSITAAQVKELRELSGAGMMDCKAALADTNGDMEAAVDWLRKKGIAKADKKAGRTAAEGLIGIVSKDTSAVLVEINSETDFVARNDLFQDIVRNVATAALDTQGNVESVSASFYPGSEKTVEATIKDAISTIGENMTFRRSAKLSVKDGVVATYIHSKVAEGLGKLGVLVAVETTGNKEAAAVFGRQVAMHIAATNPLALTAEDVDSGAVEREKAIFSDQARQSGKPENIIEKMVEGRLRKFFEEVVLLSQAFVMNPDITVEAALKDAEKSIGAPARITGFIRFALGEGVEKKESNFAAEVAAAAKG.

The interval 79–82 is involved in Mg(2+) ion dislocation from EF-Tu; that stretch reads TDFV.

Belongs to the EF-Ts family.

It localises to the cytoplasm. Functionally, associates with the EF-Tu.GDP complex and induces the exchange of GDP to GTP. It remains bound to the aminoacyl-tRNA.EF-Tu.GTP complex up to the GTP hydrolysis stage on the ribosome. The protein is Elongation factor Ts (tsf) of Bartonella quintana (strain Toulouse) (Rochalimaea quintana).